Reading from the N-terminus, the 524-residue chain is Na(+)/H(+) antiporter NhaB (524 aa).

13 helical membrane passes run 23-43 (LAII…SPFV), 45-65 (GWML…CYPL), 98-118 (LLLI…LFIF), 136-156 (CVAS…AVVI), 203-223 (LMMH…VGEP), 239-259 (FFMR…LVCI), 304-324 (ALIG…VGLV), 325-345 (GLSV…HALG), 358-378 (LTVF…TPII), 392-412 (LFYL…VGTV), 420-440 (AFEL…AINT), 448-468 (ATPN…APLI), and 479-499 (ALPY…YLLV).

The protein belongs to the NhaB Na(+)/H(+) (TC 2.A.34) antiporter family.

The protein localises to the cell inner membrane. The enzyme catalyses 2 Na(+)(in) + 3 H(+)(out) = 2 Na(+)(out) + 3 H(+)(in). Its function is as follows. Na(+)/H(+) antiporter that extrudes sodium in exchange for external protons. The sequence is that of Na(+)/H(+) antiporter NhaB from Yersinia enterocolitica serotype O:8 / biotype 1B (strain NCTC 13174 / 8081).